The primary structure comprises 524 residues: Coatomer subunit delta-1 (524 aa).

The interval 215-244 is disordered; that stretch reads MDMDSFASKPKGGRPSAAATAPGKGLGMKL. Residues 283–524 enclose the MHD domain; the sequence is SDPVTVTIEE…RLVAANYQVV (242 aa).

Belongs to the adaptor complexes medium subunit family. Delta-COP subfamily. Oligomeric complex that consists of at least the alpha, beta, beta', gamma, delta, epsilon and zeta subunits.

The protein resides in the cytoplasm. It localises to the golgi apparatus membrane. It is found in the cytoplasmic vesicle. Its subcellular location is the COPI-coated vesicle membrane. The coatomer is a cytosolic protein complex that binds to dilysine motifs and reversibly associates with Golgi non-clathrin-coated vesicles, which further mediate biosynthetic protein transport from the ER, via the Golgi up to the trans Golgi network. Coatomer complex is required for budding from Golgi membranes, and is essential for the retrograde Golgi-to-ER transport of dilysine-tagged proteins. The protein is Coatomer subunit delta-1 of Oryza sativa subsp. japonica (Rice).